Consider the following 225-residue polypeptide: Ethylene-responsive transcription factor 3 (225 aa).

A compositionally biased stretch (low complexity) spans 1 to 12 (MRRGRAAAAPAP). 2 disordered regions span residues 1 to 29 (MRRGRAAAAPAPVTGEPNGSGGSKEIRFR) and 82 to 193 (NFPL…NIAS). The segment at residues 27–84 (RFRGVRKRPWGRFAAEIRDPWKKTRVWLGTFDSAEDAARAYDAAARALRGPKAKTNFP) is a DNA-binding region (AP2/ERF). Over residues 118 to 134 (SQRPTSSSMSSTVESFS) the composition is skewed to low complexity. A compositionally biased stretch (basic and acidic residues) spans 176 to 185 (DHGDCEKEND). Residues 202–208 (FDLNLPP) carry the EAR-like (transcriptional repression) motif.

Belongs to the ethylene-response factor family. Class 2 subfamily.

The protein localises to the nucleus. Transcription factor that binds to the GCC-box pathogenesis-related promoter element. Involved in the regulation of gene expression by stress factors and by components of stress signal transduction pathways. Probably acts as a transcriptional repressor and may regulate other AtERFs. The chain is Ethylene-responsive transcription factor 3 (ERF3) from Nicotiana tabacum (Common tobacco).